The primary structure comprises 221 residues: Jacalin-related lectin 47 (221 aa).

Jacalin-type lectin domains follow at residues 1 to 64 (MDSN…YYYP) and 71 to 217 (SEKL…HVLP).

Belongs to the jacalin lectin family.

The sequence is that of Jacalin-related lectin 47 (JAL47) from Arabidopsis thaliana (Mouse-ear cress).